Reading from the N-terminus, the 363-residue chain is Type-2 angiotensin II receptor (363 aa).

Over 1 to 45 the chain is Extracellular; the sequence is MKDNFSFAATSRNITSSLPFDNLNATGTNESAFNCSHKPADKHLE. 5 N-linked (GlcNAc...) asparagine glycosylation sites follow: N4, N13, N24, N29, and N34. 2 cysteine pairs are disulfide-bonded: C35/C290 and C117/C195. Residues 46-70 form a helical membrane-spanning segment; that stretch reads AIPVLYYMIFVIGFAVNIVVVSLFC. Topologically, residues 71–80 are cytoplasmic; that stretch reads CQKGPKKVSS. The chain crosses the membrane as a helical span at residues 81–104; that stretch reads IYIFNLAVADLLLLATLPLWATYY. Angiotensin II is bound by residues Y103 and Y104. Topologically, residues 105-114 are extracellular; it reads SYRYDWLFGP. A helical membrane pass occupies residues 115–140; sequence VMCKVFGSFLTLNMFASIFFITCMSV. The Cytoplasmic portion of the chain corresponds to 141 to 159; it reads DRYQSVIYPFLSQRRNPWQ. Residues 160–181 traverse the membrane as a helical segment; that stretch reads ASYVVPLVWCMACLSSLPTFYF. R182, Y204, and K215 together coordinate angiotensin II. Residues 182-206 are Extracellular-facing; sequence RDVRTIEYLGVNACIMAFPPEKYAQ. The chain crosses the membrane as a helical span at residues 207-232; it reads WSAGIALMKNILGFIIPLIFIATCYF. Residues 233-257 are Cytoplasmic-facing; sequence GIRKHLLKTNSYGKNRITRDQVLKM. A helical membrane pass occupies residues 258–281; it reads AAAVVLAFIICWLPFHVLTFLDAL. D279 lines the angiotensin II pocket. At 282–294 the chain is on the extracellular side; that stretch reads TWMGIINSCEVIA. Residues 295-320 form a helical membrane-spanning segment; that stretch reads VIDLALPFAILLGFTNSCVNPFLYCF. Position 297 (D297) interacts with angiotensin II. Residues 321-363 lie on the Cytoplasmic side of the membrane; sequence VGNRFQQKLRSVFRVPITWLQGKRETMSCRKSSSLREMDTFVS. Residues 324-333 are helix VIII; that stretch reads RFQQKLRSVF. S354 carries the post-translational modification Phosphoserine; by PKC.

The protein belongs to the G-protein coupled receptor 1 family. As to quaternary structure, interacts with MTUS1. As to expression, abundant expression in fetal tissues, immature brain, skin wound and atretic ovarian follicles.

Its subcellular location is the cell membrane. In terms of biological role, receptor for angiotensin II, a vasoconstricting peptide. Signals primarily via a non-canonical G-protein- and beta-arrestin independent pathways. Cooperates with MTUS1 to inhibit ERK2 activation and cell proliferation. The protein is Type-2 angiotensin II receptor of Rattus norvegicus (Rat).